A 479-amino-acid chain; its full sequence is Transmembrane protein 161A (479 aa).

The first 28 residues, 1 to 28, serve as a signal peptide directing secretion; it reads MAVLGVQLVVTLLTATLMHRLAPHCSFA. Over 29-98 the chain is Extracellular; sequence RWLLCNGSLF…LTTVDALVLR (70 aa). N-linked (GlcNAc...) asparagine glycosylation is present at Asn-34. Ser-69 is subject to Phosphoserine. A helical transmembrane segment spans residues 99 to 119; sequence FFLEYQWFVDFAVYSGGVYLF. Topologically, residues 120–134 are cytoplasmic; that stretch reads TEAYYYMLGPAKETN. Residues 135–155 traverse the membrane as a helical segment; that stretch reads IAVFWCLLTVTFSIKMFLTVT. Residues 156–166 lie on the Extracellular side of the membrane; sequence RLYFSAEEGGE. A helical transmembrane segment spans residues 167–187; the sequence is RSVCLTFAFLFLLLAMLVQVV. Over 188–224 the chain is Cytoplasmic; it reads REETLELGLEPGLASMTQNLEPLLKKQGWDWALPVAK. A helical transmembrane segment spans residues 225–245; that stretch reads LAIRVGLAVVGSVLGAFLTFP. Over 246 to 263 the chain is Extracellular; that stretch reads GLRLAQTHRDALTMSEDR. A helical membrane pass occupies residues 264–284; the sequence is PMLQFLLHTSFLSPLFILWLW. Residues 285 to 304 are Cytoplasmic-facing; sequence TKPIARDFLHQPPFGETRFS. Residues 305 to 325 traverse the membrane as a helical segment; sequence LLSDSAFDSGRLWLLVVLCLL. Topologically, residues 326-370 are extracellular; it reads RLAVTRPHLQAYLCLAKARVEQLRREAGRIEAREIQQRVVRVYCY. A helical transmembrane segment spans residues 371–391; it reads VTVVSLQYLTPLILTLNCTLL. At 392–449 the chain is on the cytoplasmic side; the sequence is LKTLGGYSWGLGPAPLLSPDPSSASAAPIGSGEDEVQQTAARIAGALGGLLTPLFLRG. The chain crosses the membrane as a helical span at residues 450–470; the sequence is VLAYLIWWTAACQLLASLFGL. The Extracellular portion of the chain corresponds to 471–479; it reads YFHQHLAGS.

This sequence belongs to the TMEM161 family.

The protein localises to the membrane. Its function is as follows. May play a role in protection against oxidative stress. Overexpression leads to reduced levels of oxidant-induced DNA damage and apoptosis. This Homo sapiens (Human) protein is Transmembrane protein 161A (TMEM161A).